The following is a 115-amino-acid chain: Large ribosomal subunit protein bL20 (115 aa).

Belongs to the bacterial ribosomal protein bL20 family.

Binds directly to 23S ribosomal RNA and is necessary for the in vitro assembly process of the 50S ribosomal subunit. It is not involved in the protein synthesizing functions of that subunit. The protein is Large ribosomal subunit protein bL20 of Synechococcus sp. (strain CC9605).